A 316-amino-acid chain; its full sequence is Probable porphobilinogen deaminase (316 aa).

S-(dipyrrolylmethanemethyl)cysteine is present on Cys234.

It belongs to the HMBS family. Dipyrromethane serves as cofactor.

The enzyme catalyses 4 porphobilinogen + H2O = hydroxymethylbilane + 4 NH4(+). The protein operates within porphyrin-containing compound metabolism; protoporphyrin-IX biosynthesis; coproporphyrinogen-III from 5-aminolevulinate: step 2/4. Functionally, tetrapolymerization of the monopyrrole PBG into the hydroxymethylbilane pre-uroporphyrinogen in several discrete steps. The polypeptide is Probable porphobilinogen deaminase (Methanosarcina barkeri (strain Fusaro / DSM 804)).